Consider the following 251-residue polypeptide: MTQLPELGLRSPNNKSPTGPHPLEHLLARLLKRRRRSTLMSSPRSLLCSISGPGSHLLSTHPILCHSVYQPPQPASRPQAKRYQGLLPVPLAPHPLCLSGQLYLPNIPCTVIDGCGPVISHLKLTMYPWGLPPSHLGSSSPFSANMEQWDYYKSQTRFAPFLPESFCGSPLPSEQSSRPFGLAFKVLCAATCQPPQFQLLWLCPYKLDLHQRICLPPNLALVLLGALWTSPPPGSFLQPPYNRPYKLYKTN.

Positions 1 to 22 are disordered; that stretch reads MTQLPELGLRSPNNKSPTGPHP.

This is an uncharacterized protein from Homo sapiens (Human).